The following is an 820-amino-acid chain: Leucine--tRNA ligase (820 aa).

The 'HIGH' region motif lies at 40 to 51; that stretch reads PYPSGAGLHVGH. The 'KMSKS' region signature appears at 601–605; the sequence is KMSKS. Lysine 604 is a binding site for ATP.

It belongs to the class-I aminoacyl-tRNA synthetase family.

The protein localises to the cytoplasm. The enzyme catalyses tRNA(Leu) + L-leucine + ATP = L-leucyl-tRNA(Leu) + AMP + diphosphate. The sequence is that of Leucine--tRNA ligase from Chlamydia felis (strain Fe/C-56) (Chlamydophila felis).